A 569-amino-acid chain; its full sequence is Toxin YxiD (569 aa).

The LXG domain occupies 1 to 235 (MKTLDVHALH…NPQMKQADDS (235 aa)). Positions 8–91 (ALHEGIQHTI…QHAISSVESN (84 aa)) form a coiled coil. Residues 548–569 (HQAGIHGTGSPANELFKGGKKK) are disordered.

This sequence in the N-terminal section; belongs to the LXG family. As to quaternary structure, probably interacts with cognate immunity protein YxxD but not with non-cognate immunity proteins. The interaction inhibits the toxic activity of YxxD.

The protein resides in the secreted. In terms of biological role, toxic component of one of 6 LXG toxin-immunity modules in this strain. They promote kin selection, mediate competition in biofilms, and drive spatial segregation of different strains, indicating that LXG toxins may help avoid warfare between strains in biofilms. Mediates intercellular competition during biofilm formation; disruption of the operon disadvantages the bacteria, but overexpression of the cognate immunity protein restores growth in competition with wild-type. Overexpression alone in situ causes growth arrest but not cell lysis, a large decrease in chromosomal DNA content and the production of anucleate cells. No effect is seen on rRNA. Co-overexpression with cognate immunity protein YxxD does not cause growth arrest. The toxic effect is not dependent on the epsA and tapA operons which are required for biofilm formation. The chain is Toxin YxiD (yxiD) from Bacillus subtilis (strain 168).